The sequence spans 156 residues: Snaclec jerdonibitin subunit alpha (156 aa).

An N-terminal signal peptide occupies residues 1-23 (MGRFIFVSFGLLVVFLSLSGTGA). Disulfide bonds link Cys25–Cys36, Cys53–Cys150, and Cys125–Cys142. The 120-residue stretch at 32 to 151 (FRQYCYRVFK…CGQQHLFMCK (120 aa)) folds into the C-type lectin domain.

This sequence belongs to the snaclec family. As to quaternary structure, heterodimer of subunits alpha and beta; disulfide-linked. Expressed by the venom gland.

It localises to the secreted. Snaclec that dose-dependently inhibits platelet aggregation induced by ristocetin or low-dose thrombin, but not by high-dose thrombin. Binds to GPIbalpha (GP1BA). In vivo, also dose-dependently induces thrombocytopenia of mice and platelet counts remains at very low level even after 18 hours intravenous injection. The sequence is that of Snaclec jerdonibitin subunit alpha from Protobothrops jerdonii (Jerdon's pitviper).